The sequence spans 249 residues: Methylthioribulose-1-phosphate dehydratase (249 aa).

His-103 and His-105 together coordinate Zn(2+).

The protein belongs to the aldolase class II family. MtnB subfamily. Zn(2+) serves as cofactor.

The enzyme catalyses 5-(methylsulfanyl)-D-ribulose 1-phosphate = 5-methylsulfanyl-2,3-dioxopentyl phosphate + H2O. It participates in amino-acid biosynthesis; L-methionine biosynthesis via salvage pathway; L-methionine from S-methyl-5-thio-alpha-D-ribose 1-phosphate: step 2/6. In terms of biological role, catalyzes the dehydration of methylthioribulose-1-phosphate (MTRu-1-P) into 2,3-diketo-5-methylthiopentyl-1-phosphate (DK-MTP-1-P). This Leptospira interrogans serogroup Icterohaemorrhagiae serovar copenhageni (strain Fiocruz L1-130) protein is Methylthioribulose-1-phosphate dehydratase.